A 664-amino-acid polypeptide reads, in one-letter code: Intraflagellar transport protein 70B (664 aa).

7 TPR repeats span residues 11–44, 45–78, 153–186, 188–220, 385–418, 423–456, and 458–491; these read DGEFTAVVYRLIRDSRYSEAVQLLSAELQGSPRS, RAGLSLLAYCYYRLQEFELAAECYEQLSQMHPEL, YDGQINLGCLLYKEGHYEAACSKFLAALQASGYQ, DISYNLALAYYSSRQYAPALKHIADIIERGIRQ, LTEQLRRLTIQVQDARHSRDDESAKKAVNDYDET, IPVLMAQAKIYWNLENYPMVEKIFRKSVEFCNDH, and VWKLNVAHVLFMQENKYKEAIGFYEPIVKKNYDN. Positions 507-534 form a coiled coil; it reads YIMTSQNEEAEELMRKIEKEEEQLSYDD. A TPR 8 repeat occupies 543–576; sequence CIVNLVIGTLYCAKGNYDFGISRVIKSLEPYHKK.

It belongs to the TTC30/dfy-1/fleer family. As to quaternary structure, interacts with the IFT B complex components IFT27, IFT46, IFT74, IFT52, IFT57, IFT80, IFT81 and IFT88. Interacts with KIF17.

Its subcellular location is the cell projection. The protein resides in the cilium. Functionally, required for polyglutamylation of axonemal tubulin. Plays a role in anterograde intraflagellar transport (IFT), the process by which cilia precursors are transported from the base of the cilium to the site of their incorporation at the tip. The polypeptide is Intraflagellar transport protein 70B (Ift70b) (Rattus norvegicus (Rat)).